A 562-amino-acid chain; its full sequence is Thermosome subunit alpha (562 aa).

2 disordered regions span residues 1–23 (MAQQMGNQPLIVLSEDSQRTSGE) and 526–551 (GGQVGDDDGDDGPAGGPGGMGGGMGG). The segment covering 537–551 (GPAGGPGGMGGGMGG) has biased composition (gly residues).

Belongs to the TCP-1 chaperonin family. In terms of assembly, forms an oligomeric complex of eight-membered rings.

Molecular chaperone; binds unfolded polypeptides in vitro, and has a weak ATPase activity. The sequence is that of Thermosome subunit alpha (thsA) from Halobacterium salinarum (strain ATCC 700922 / JCM 11081 / NRC-1) (Halobacterium halobium).